We begin with the raw amino-acid sequence, 449 residues long: Heterogeneous nuclear ribonucleoprotein H (449 aa).

The residue at position 1 (methionine 1) is an N-acetylmethionine. Methionine 2 carries the N-acetylmethionine; in Heterogeneous nuclear ribonucleoprotein H, N-terminally processed modification. The 80-residue stretch at 11-90 (FVVKVRGLPW…RYVEVFKSNN (80 aa)) folds into the RRM 1 domain. Serine 23 carries the phosphoserine modification. Residue lysine 35 forms a Glycyl lysine isopeptide (Lys-Gly) (interchain with G-Cter in SUMO2) linkage. Residues serine 54 and serine 63 each carry the phosphoserine modification. Residues lysine 87 and lysine 98 each participate in a glycyl lysine isopeptide (Lys-Gly) (interchain with G-Cter in SUMO2) cross-link. In terms of domain architecture, RRM 2 spans 111–188 (GFVRLRGLPF…RYIEIFKSSR (78 aa)). Arginine 233 is modified (dimethylated arginine; alternate). At arginine 233 the chain carries Omega-N-methylarginine; alternate. One copy of the 1-1 repeat lies at 234-249 (GAYGGGYGGYDDYNGY). A 2 X 16 AA Gly-rich approximate repeats region spans residues 234-433 (GAYGGGYGGY…YGGQSSMSGY (200 aa)). Phosphotyrosine is present on tyrosine 246. Residues 289–364 (HCVHMRGLPY…RYVELFLNST (76 aa)) form the RRM 3 domain. Serine 310 bears the Phosphoserine mark. A run of 3 repeats spans residues 354–372 (HRYV…GGAY), 374–392 (HRYV…GGAY), and 418–433 (GGYG…MSGY). Residues 354-392 (HRYVELFLNSTAGASGGAYEHRYVELFLNSTAGASGGAY) are 2 X 19 AA perfect repeats.

Part of a ternary complex containing FUBP2, PTBP1, PTBP2 and HNRNPH1. Identified in the spliceosome C complex. Interacts with IGF2BP1. Interacts with CUGBP1; the interaction is RNA-dependent. Interacts with MBNL1; the interaction in RNA-independent.

The protein resides in the nucleus. The protein localises to the nucleoplasm. Its function is as follows. This protein is a component of the heterogeneous nuclear ribonucleoprotein (hnRNP) complexes which provide the substrate for the processing events that pre-mRNAs undergo before becoming functional, translatable mRNAs in the cytoplasm. Mediates pre-mRNA alternative splicing regulation. Inhibits, together with CUGBP1, insulin receptor (IR) pre-mRNA exon 11 inclusion in myoblast. Binds to the IR RNA. Binds poly(RG). This chain is Heterogeneous nuclear ribonucleoprotein H (Hnrnph1), found in Rattus norvegicus (Rat).